The chain runs to 438 residues: Probable trafficking protein particle complex subunit 13 homolog (438 aa).

This sequence belongs to the TRAPPC13 family.

The chain is Probable trafficking protein particle complex subunit 13 homolog from Drosophila melanogaster (Fruit fly).